A 137-amino-acid polypeptide reads, in one-letter code: uncharacterized protein (137 aa).

The protein belongs to the DCC thiol-disulfide oxidoreductase family.

This is an uncharacterized protein from Bacillus subtilis (strain 168).